Reading from the N-terminus, the 497-residue chain is Paired box protein Pax-2-A (497 aa).

The segment at residues 16-142 is a DNA-binding region (paired); sequence GHGGVNQLGG…SSINRIIRTK (127 aa). The tract at residues 19 to 75 is PAI subdomain; that stretch reads GVNQLGGVFVNGRPLPDVVRQRIVELAHQGVRPCDISRQLRVSHGCVSKILGRYYET. Residues 94-142 are RED subdomain; the sequence is KVVDKIAEYKRQNPTMFAWEIRDRLLAEGICDNDTVPSVSSINRIIRTK. The segment at 143 to 224 is disordered; the sequence is VQQPFHPTPD…GDSQSSVESL (82 aa). Over residues 166-178 the composition is skewed to low complexity; sequence VPSTASPPVSSAS.

Expression becomes spatially localized at mid-gastrula stages and is confined to the nervous system (midbrain, hindbrain, spinal cord), sensory organs (optic vesicle and stalk, otic vesicle), visceral arches, developing excretory system (pronephros, pronephric duct, rectal diverticulum, proctodaeum) and thyroid gland. Splicing does not appear to be tissue-specific and tissues displayed the same spectrum of splice variants.

Its subcellular location is the nucleus. Functionally, probable transcription factor. Involved in kidney development, acting synergistically with lhx1/lim-1 in pronephric morphogenesis during the tailbud stages. The sequence is that of Paired box protein Pax-2-A (pax2-a) from Xenopus laevis (African clawed frog).